The following is a 587-amino-acid chain: Glutathione hydrolase proenzyme (587 aa).

The N-terminal stretch at 1–28 (MKRTWNVCLTALLSVLLVAGSVPFHAEA) is a signal peptide. A propeptide spanning residues 29-35 (KKPPKSY) is cleaved from the precursor. Arginine 113 lines the L-glutamate pocket. Residue threonine 403 is the Nucleophile of the active site. L-glutamate contacts are provided by residues threonine 421, glutamate 423, glutamate 442, aspartate 445, 464–465 (SS), and 485–486 (GG).

It belongs to the gamma-glutamyltransferase family. In terms of assembly, this enzyme consists of two polypeptide chains, which are synthesized in precursor form from a single polypeptide. Post-translationally, cleaved by autocatalysis into a large and a small subunit.

It localises to the secreted. The enzyme catalyses an N-terminal (5-L-glutamyl)-[peptide] + an alpha-amino acid = 5-L-glutamyl amino acid + an N-terminal L-alpha-aminoacyl-[peptide]. It carries out the reaction glutathione + H2O = L-cysteinylglycine + L-glutamate. The catalysed reaction is an S-substituted glutathione + H2O = an S-substituted L-cysteinylglycine + L-glutamate. It functions in the pathway sulfur metabolism; glutathione metabolism. Cleaves the gamma-glutamyl bond of extracellular glutathione (gamma-Glu-Cys-Gly), glutathione conjugates, and other gamma-glutamyl compounds. The metabolism of glutathione releases free glutamate and the dipeptide cysteinyl-glycine, which is hydrolyzed to cysteine and glycine by dipeptidases. The protein is Glutathione hydrolase proenzyme (ggt) of Bacillus subtilis (strain 168).